A 379-amino-acid polypeptide reads, in one-letter code: Bifunctional riboflavin kinase/FMN phosphatase (379 aa).

S2 carries the N-acetylserine modification. Residue D17 is the Nucleophile; for FMN phosphatase activity of the active site. Mg(2+) is bound by residues D17 and D19. Residue D19 is the Proton donor; for FMN phosphatase activity of the active site. 4 residues coordinate ATP: G248, K254, T260, and N262. T260 is a Mg(2+) binding site. Residue E312 is the Nucleophile; for riboflavin kinase activity of the active site. ATP-binding residues include L315, H317, and Y324. Residues R337 and F342 each coordinate FMN.

In the N-terminal section; belongs to the HAD-like hydrolase superfamily. CbbY/CbbZ/Gph/YieH family. It in the C-terminal section; belongs to the flavokinase family. As to quaternary structure, monomer. It depends on Mg(2+) as a cofactor.

The catalysed reaction is riboflavin + ATP = FMN + ADP + H(+). It catalyses the reaction FMN + H2O = riboflavin + phosphate. The protein operates within cofactor biosynthesis; FMN biosynthesis; FMN from riboflavin (ATP route): step 1/1. In terms of biological role, bifunctional enzyme that catalyzes the hydrolysis of flavin-mononucleotide (FMN) to riboflavin (vitamin B2) and the phosphorylation of riboflavin to form (FMN) coenzyme. This chain is Bifunctional riboflavin kinase/FMN phosphatase, found in Arabidopsis thaliana (Mouse-ear cress).